The primary structure comprises 456 residues: General transcription factor IIE subunit 1 (456 aa).

An HTH TFE/IIEalpha-type domain is found at 11-100 (LDDLVKMVIR…LWYIDYKHII (90 aa)). The C4-type zinc finger occupies 129–157 (CQTCHKVYTALDIPKLLNMDTGALACEIC). Positions 345–402 (ESAPDSGDADGNGSNSGSGGSTIEGNDGGNGEHQNKKMKLDDSQTVSSMSQSDDDGKD) are disordered. The span at 347–357 (APDSGDADGNG) shows a compositional bias: low complexity. The span at 358–375 (SNSGSGGSTIEGNDGGNG) shows a compositional bias: gly residues. Positions 377–386 (HQNKKMKLDD) are enriched in basic and acidic residues.

Belongs to the TFIIE alpha subunit family. In terms of assembly, TFIIE is a tetramer of two alpha and two beta subunits.

It is found in the nucleus. In terms of biological role, recruits TFIIH to the initiation complex and stimulates the RNA polymerase II C-terminal domain kinase and DNA-dependent ATPase activities of TFIIH. Both TFIIH and TFIIE are required for promoter clearance by RNA polymerase. The chain is General transcription factor IIE subunit 1 (gtf2e1-1) from Dictyostelium discoideum (Social amoeba).